The chain runs to 309 residues: MKAPSDMKHYLQFKDFSAQEYAYLFERAAVIKGKFKRYEKHHPLTDRTLAMIFEKASTRTRVSFEAGMYQLGGSVVHLTTGDSQLGRAEPIEDSAKVISRMVDLVMIRTYEQTKIERFAAHSRVPVINGLTNEFHPCQILADIFTFIEHRGSIQGRTVAWVGDGNNMANTWLQAAELLGFTVHVSTPSGYEVDSRVAGVAAGSHYKVFSDPLEACRGADLITTDVWTSMGYEAENEARKKAFADWCVDAEMMAAARPEALFMHCLPAHRGEEVEADVIDGPQSVVWDEAENRMHVQKALMEYLLLGQVA.

Carbamoyl phosphate is bound by residues 57 to 60 (STRT), glutamine 84, arginine 108, and 135 to 138 (HPCQ). Residues asparagine 166, aspartate 224, and 228–229 (SM) contribute to the L-ornithine site. Carbamoyl phosphate contacts are provided by residues 264 to 265 (CL) and arginine 292.

This sequence belongs to the aspartate/ornithine carbamoyltransferase superfamily. OTCase family.

The protein resides in the cytoplasm. It catalyses the reaction carbamoyl phosphate + L-ornithine = L-citrulline + phosphate + H(+). It participates in amino-acid biosynthesis; L-arginine biosynthesis; L-arginine from L-ornithine and carbamoyl phosphate: step 1/3. In terms of biological role, reversibly catalyzes the transfer of the carbamoyl group from carbamoyl phosphate (CP) to the N(epsilon) atom of ornithine (ORN) to produce L-citrulline. This is Ornithine carbamoyltransferase from Paracidovorax citrulli (strain AAC00-1) (Acidovorax citrulli).